The following is a 59-amino-acid chain: Large ribosomal subunit protein bL33 (59 aa).

Residues 26–59 (RYTTTKNKKNNTERLVLKKYNPNLKKHTEHKEIK) are disordered.

Belongs to the bacterial ribosomal protein bL33 family.

This chain is Large ribosomal subunit protein bL33, found in Chlorobium phaeobacteroides (strain BS1).